Here is a 121-residue protein sequence, read N- to C-terminus: Large ribosomal subunit protein uL22 (121 aa).

This sequence belongs to the universal ribosomal protein uL22 family. As to quaternary structure, part of the 50S ribosomal subunit.

This protein binds specifically to 23S rRNA; its binding is stimulated by other ribosomal proteins, e.g. L4, L17, and L20. It is important during the early stages of 50S assembly. It makes multiple contacts with different domains of the 23S rRNA in the assembled 50S subunit and ribosome. Its function is as follows. The globular domain of the protein is located near the polypeptide exit tunnel on the outside of the subunit, while an extended beta-hairpin is found that lines the wall of the exit tunnel in the center of the 70S ribosome. This Rickettsia massiliae (strain Mtu5) protein is Large ribosomal subunit protein uL22.